The chain runs to 152 residues: Deoxyuridine 5'-triphosphate nucleotidohydrolase (152 aa).

Residues 71-73 (RSG), N84, 88-90 (LID), and M98 contribute to the substrate site.

Belongs to the dUTPase family. Mg(2+) is required as a cofactor.

It catalyses the reaction dUTP + H2O = dUMP + diphosphate + H(+). The protein operates within pyrimidine metabolism; dUMP biosynthesis; dUMP from dCTP (dUTP route): step 2/2. This enzyme is involved in nucleotide metabolism: it produces dUMP, the immediate precursor of thymidine nucleotides and it decreases the intracellular concentration of dUTP so that uracil cannot be incorporated into DNA. In Shewanella sediminis (strain HAW-EB3), this protein is Deoxyuridine 5'-triphosphate nucleotidohydrolase.